Reading from the N-terminus, the 341-residue chain is ATPase GET3 (341 aa).

34–41 (KGGVGKTT) contributes to the ATP binding site. Asp-63 is an active-site residue. Residues Glu-245 and Asn-272 each coordinate ATP. 2 residues coordinate Zn(2+): Cys-283 and Cys-286.

This sequence belongs to the arsA ATPase family. As to quaternary structure, homodimer.

It is found in the cytoplasm. The protein resides in the endoplasmic reticulum. Functionally, ATPase required for the post-translational delivery of tail-anchored (TA) proteins to the endoplasmic reticulum. Recognizes and selectively binds the transmembrane domain of TA proteins in the cytosol. This complex then targets to the endoplasmic reticulum by membrane-bound receptors, where the tail-anchored protein is released for insertion. This process is regulated by ATP binding and hydrolysis. ATP binding drives the homodimer towards the closed dimer state, facilitating recognition of newly synthesized TA membrane proteins. ATP hydrolysis is required for insertion. Subsequently, the homodimer reverts towards the open dimer state, lowering its affinity for the membrane-bound receptor, and returning it to the cytosol to initiate a new round of targeting. The polypeptide is ATPase GET3 (Ajellomyces capsulatus (strain G186AR / H82 / ATCC MYA-2454 / RMSCC 2432) (Darling's disease fungus)).